A 206-amino-acid polypeptide reads, in one-letter code: Isochorismatase domain-containing protein 2A (206 aa).

Lysine 26 is modified (N6-succinyllysine). N6-acetyllysine; alternate is present on residues lysine 93 and lysine 178. N6-succinyllysine; alternate is present on residues lysine 93 and lysine 178. Residues lysine 182 and lysine 185 each carry the N6-acetyllysine modification.

This sequence belongs to the isochorismatase family. As to quaternary structure, interacts with CDKN2A. In terms of tissue distribution, ubiquitous. Expressed predominantly in uterus, stomach and urinary tract.

It localises to the cytoplasm. The protein localises to the nucleus. This Mus musculus (Mouse) protein is Isochorismatase domain-containing protein 2A.